Consider the following 318-residue polypeptide: Taste receptor type 2 member 60 (318 aa).

The Extracellular portion of the chain corresponds to 1-7 (MNGDHMV). Residues 8–28 (LGSSMTDEKAIILVIILLLLC) form a helical membrane-spanning segment. At 29–40 (LVAIAGNCFITA) the chain is on the cytoplasmic side. Residues 41–61 (ALGMEWVLQRMLLPCDKLLVS) traverse the membrane as a helical segment. Residues 62 to 88 (LGASRFCPQWVVMGKTTYVFLYPTAFP) lie on the Extracellular side of the membrane. Residues 89-109 (YNPVLRFLAFQWDLLNAATLW) traverse the membrane as a helical segment. Residues 110–128 (FSTWLSVFYCVKIATFTHP) are Cytoplasmic-facing. The chain crosses the membrane as a helical span at residues 129–149 (VFLWLKHKLSEWVPWMLFSSV). Residues 150 to 183 (GLSSFTTILFFIGNHRVYQSYLRNHLQPWNVTGN) lie on the Extracellular side of the membrane. N179 carries an N-linked (GlcNAc...) asparagine glycan. A helical transmembrane segment spans residues 184 to 204 (SIWSYCEKFYLFPLKMITWTM). At 205 to 234 (PTAVFFICMILLITSLGRHMKKALLTNSGF) the chain is on the cytoplasmic side. Residues 235-255 (RDPSVQAHIKAMLALLSFAML) traverse the membrane as a helical segment. Residues 256 to 264 (FISYFLSLV) lie on the Extracellular side of the membrane. The helical transmembrane segment at 265-285 (FSAAGIFPPLDFKFWVWESVI) threads the bilayer. At 286–318 (YLCAAVHPIILLFSNRRLRAVLKRCRSSRCGTP) the chain is on the cytoplasmic side.

The protein belongs to the G-protein coupled receptor T2R family.

The protein resides in the membrane. Receptor that may play a role in the perception of bitterness and is gustducin-linked. May play a role in sensing the chemical composition of the gastrointestinal content. The activity of this receptor may stimulate alpha gustducin, mediate PLC-beta-2 activation and lead to the gating of TRPM5. This chain is Taste receptor type 2 member 60 (TAS2R60), found in Pongo pygmaeus (Bornean orangutan).